Here is a 367-residue protein sequence, read N- to C-terminus: 2-aminoethylphosphonate--pyruvate transaminase (367 aa).

At lysine 194 the chain carries N6-(pyridoxal phosphate)lysine.

It belongs to the class-V pyridoxal-phosphate-dependent aminotransferase family. PhnW subfamily. As to quaternary structure, homodimer. Pyridoxal 5'-phosphate serves as cofactor.

The enzyme catalyses (2-aminoethyl)phosphonate + pyruvate = phosphonoacetaldehyde + L-alanine. Functionally, involved in phosphonate degradation. The polypeptide is 2-aminoethylphosphonate--pyruvate transaminase (Salmonella paratyphi B (strain ATCC BAA-1250 / SPB7)).